A 261-amino-acid chain; its full sequence is Cytochrome c oxidase subunit 3 (261 aa).

Over 2 to 15 the chain is Mitochondrial matrix; the sequence is THQTHAYHMVNPSP. The chain crosses the membrane as a helical span at residues 16 to 34; the sequence is WPLTGALSALLLTSGLVMW. The Mitochondrial intermembrane portion of the chain corresponds to 35-40; that stretch reads FHYNST. Residues 41–66 traverse the membrane as a helical segment; sequence ILLSLGLLTNILTMYQWWRDIIREGT. The Mitochondrial matrix portion of the chain corresponds to 67–72; that stretch reads YQGHHT. Residues 73–105 traverse the membrane as a helical segment; it reads PIVQKGLRYGMILFIVSEVFFFAGFFWAFYHSS. Topologically, residues 106 to 128 are mitochondrial intermembrane; that stretch reads LVPTHDLGGCWPPTGITPLNPLE. The helical transmembrane segment at 129–152 threads the bilayer; that stretch reads VPLLNTSVLLASGVSITWAHHSLM. The Mitochondrial matrix segment spans residues 153-155; it reads EGN. The chain crosses the membrane as a helical span at residues 156 to 183; it reads RNHMNQALLITILLGLYFTILQASEYFE. The Mitochondrial intermembrane segment spans residues 184 to 190; it reads TSFSISD. A helical membrane pass occupies residues 191 to 223; it reads GIYGSTFFMATGFHGLHVIIGSTFLIVCLLRQL. Residues 224 to 232 are Mitochondrial matrix-facing; that stretch reads KFHFTSKHH. Residues 233–256 traverse the membrane as a helical segment; it reads FGFEAAAWYWHFVDVVWLFLYVSI. The Mitochondrial intermembrane portion of the chain corresponds to 257–261; sequence YWWGS.

This sequence belongs to the cytochrome c oxidase subunit 3 family. In terms of assembly, component of the cytochrome c oxidase (complex IV, CIV), a multisubunit enzyme composed of 14 subunits. The complex is composed of a catalytic core of 3 subunits MT-CO1, MT-CO2 and MT-CO3, encoded in the mitochondrial DNA, and 11 supernumerary subunits COX4I, COX5A, COX5B, COX6A, COX6B, COX6C, COX7A, COX7B, COX7C, COX8 and NDUFA4, which are encoded in the nuclear genome. The complex exists as a monomer or a dimer and forms supercomplexes (SCs) in the inner mitochondrial membrane with NADH-ubiquinone oxidoreductase (complex I, CI) and ubiquinol-cytochrome c oxidoreductase (cytochrome b-c1 complex, complex III, CIII), resulting in different assemblies (supercomplex SCI(1)III(2)IV(1) and megacomplex MCI(2)III(2)IV(2)).

The protein localises to the mitochondrion inner membrane. The enzyme catalyses 4 Fe(II)-[cytochrome c] + O2 + 8 H(+)(in) = 4 Fe(III)-[cytochrome c] + 2 H2O + 4 H(+)(out). In terms of biological role, component of the cytochrome c oxidase, the last enzyme in the mitochondrial electron transport chain which drives oxidative phosphorylation. The respiratory chain contains 3 multisubunit complexes succinate dehydrogenase (complex II, CII), ubiquinol-cytochrome c oxidoreductase (cytochrome b-c1 complex, complex III, CIII) and cytochrome c oxidase (complex IV, CIV), that cooperate to transfer electrons derived from NADH and succinate to molecular oxygen, creating an electrochemical gradient over the inner membrane that drives transmembrane transport and the ATP synthase. Cytochrome c oxidase is the component of the respiratory chain that catalyzes the reduction of oxygen to water. Electrons originating from reduced cytochrome c in the intermembrane space (IMS) are transferred via the dinuclear copper A center (CU(A)) of subunit 2 and heme A of subunit 1 to the active site in subunit 1, a binuclear center (BNC) formed by heme A3 and copper B (CU(B)). The BNC reduces molecular oxygen to 2 water molecules using 4 electrons from cytochrome c in the IMS and 4 protons from the mitochondrial matrix. This is Cytochrome c oxidase subunit 3 from Rattus norvegicus (Rat).